We begin with the raw amino-acid sequence, 339 residues long: MKILILLVAFVAAANAVSLYELVKEEWNAFKLQHRKNYDSETEERIRLKIYVQNKHKIAKHNQRFDLGQEKYRLRVNKYADLLHEEFVQTVNGFNRTDSKKSLKGVRIEEPVTFIEPANVEVPTTVDWRKKGAVTPVKDQGHCGSCWSFSATGALEGQHFRKTGKLVSLSEQNLVDCSGKYGNNGCNGGMMDYAFQYIKDNGGIDTEKSYPYEAIDDTCHFNPKAVGATDKGYVDIPQGDEEALKKALATVGPVSIAIDASHESFQFYSEGVYYEPQCDSENLDHGVLAVGYGTSEEGEDYWLVKNSWGTTWGDQGYVKMARNRDNHCGVATCASYPLV.

Positions 1-16 (MKILILLVAFVAAANA) are cleaved as a signal peptide. Residues 17–121 (VSLYELVKEE…VTFIEPANVE (105 aa)) constitute a propeptide, activation peptide. The N-linked (GlcNAc...) asparagine glycan is linked to Asn-95. 3 disulfides stabilise this stretch: Cys-143/Cys-186, Cys-177/Cys-219, and Cys-278/Cys-328. The active site involves Cys-146. Catalysis depends on residues His-285 and Asn-306.

The protein belongs to the peptidase C1 family. In terms of assembly, dimer of a heavy and a light chain linked by disulfide bonds. Interacts with cystatin; the interaction results in inhibition of cathepsin L-like peptidase activity. As to expression, salivary gland. Midgut.

It catalyses the reaction Specificity close to that of papain. As compared to cathepsin B, cathepsin L exhibits higher activity toward protein substrates, but has little activity on Z-Arg-Arg-NHMec, and no peptidyl-dipeptidase activity.. More active in the presence of a reducing agent DTT. Proteinase exhibiting preference for Leu, Val and Phe residues at the P2 position. This chain is Cathepsin L-like peptidase, found in Aedes aegypti (Yellowfever mosquito).